The chain runs to 193 residues: Holliday junction branch migration complex subunit RuvA (193 aa).

Positions 1 to 64 (MIGRIAGILL…EDAHLLYGFL (64 aa)) are domain I. Positions 65 to 139 (TPQERTTFRE…GKLGADLGAL (75 aa)) are domain II. The flexible linker stretch occupies residues 139–143 (LAGAA). The domain III stretch occupies residues 144–193 (SQSDHAADILNALVALGYSEKEGLAAIKNVPAGTGVSEGIKLALKALSKV).

The protein belongs to the RuvA family. Homotetramer. Forms an RuvA(8)-RuvB(12)-Holliday junction (HJ) complex. HJ DNA is sandwiched between 2 RuvA tetramers; dsDNA enters through RuvA and exits via RuvB. An RuvB hexamer assembles on each DNA strand where it exits the tetramer. Each RuvB hexamer is contacted by two RuvA subunits (via domain III) on 2 adjacent RuvB subunits; this complex drives branch migration. In the full resolvosome a probable DNA-RuvA(4)-RuvB(12)-RuvC(2) complex forms which resolves the HJ.

It localises to the cytoplasm. Functionally, the RuvA-RuvB-RuvC complex processes Holliday junction (HJ) DNA during genetic recombination and DNA repair, while the RuvA-RuvB complex plays an important role in the rescue of blocked DNA replication forks via replication fork reversal (RFR). RuvA specifically binds to HJ cruciform DNA, conferring on it an open structure. The RuvB hexamer acts as an ATP-dependent pump, pulling dsDNA into and through the RuvAB complex. HJ branch migration allows RuvC to scan DNA until it finds its consensus sequence, where it cleaves and resolves the cruciform DNA. The protein is Holliday junction branch migration complex subunit RuvA of Burkholderia ambifaria (strain ATCC BAA-244 / DSM 16087 / CCUG 44356 / LMG 19182 / AMMD) (Burkholderia cepacia (strain AMMD)).